The sequence spans 201 residues: Large ribosomal subunit protein eL15 (201 aa).

It belongs to the eukaryotic ribosomal protein eL15 family.

The polypeptide is Large ribosomal subunit protein eL15 (RPL15) (Quercus suber (Cork oak)).